Consider the following 876-residue polypeptide: Inter-alpha-trypsin inhibitor heavy chain H3 (876 aa).

The signal sequence occupies residues 1 to 18 (MVALSHLGSALQLGSLWG). A propeptide spanning residues 19 to 31 (FPRSPFRLLGKRS) is cleaved from the precursor. The VIT domain maps to 26–155 (LLGKRSLPEG…KVTFELTYEE (130 aa)). N-linked (GlcNAc...) asparagine glycosylation occurs at asparagine 88. The VWFA domain occupies 281–464 (NVAFVIDISG…LQLQGFYEEV (184 aa)). A glycan (N-linked (GlcNAc...) asparagine) is linked at asparagine 577. Aspartate 1-(chondroitin 4-sulfate)-ester is present on aspartate 637. Positions 638–876 (PHFIIQVPEK…HTDYIVPNLF (239 aa)) are excised as a propeptide.

The protein belongs to the ITIH family. I-alpha-I plasma protease inhibitors are assembled from one or two heavy chains (HC) and one light chain, bikunin. Pre-alpha-inhibitor (P-alpha-I) is composed of ITIH3/HC3 and bikunin. In terms of processing, heavy chains are linked to bikunin via chondroitin 4-sulfate esterified to the alpha-carboxyl of the C-terminal aspartate after propeptide cleavage.

It localises to the secreted. Functionally, may act as a carrier of hyaluronan in serum or as a binding protein between hyaluronan and other matrix protein, including those on cell surfaces in tissues to regulate the localization, synthesis and degradation of hyaluronan which are essential to cells undergoing biological processes. The chain is Inter-alpha-trypsin inhibitor heavy chain H3 (ITIH3) from Pongo abelii (Sumatran orangutan).